We begin with the raw amino-acid sequence, 378 residues long: tRNA-specific 2-thiouridylase MnmA (378 aa).

ATP contacts are provided by residues 12-19 (GLSGGVDS) and Met-38. An interaction with target base in tRNA region spans residues 98-100 (NPD). Cys-103 (nucleophile) is an active-site residue. Cys-103 and Cys-201 are joined by a disulfide. Position 127 (Gly-127) interacts with ATP. Residues 151 to 153 (KDQ) form an interaction with tRNA region. Residue Cys-201 is the Cysteine persulfide intermediate of the active site. An interaction with tRNA region spans residues 319 to 320 (RY).

The protein belongs to the MnmA/TRMU family.

It localises to the cytoplasm. It catalyses the reaction S-sulfanyl-L-cysteinyl-[protein] + uridine(34) in tRNA + AH2 + ATP = 2-thiouridine(34) in tRNA + L-cysteinyl-[protein] + A + AMP + diphosphate + H(+). Its function is as follows. Catalyzes the 2-thiolation of uridine at the wobble position (U34) of tRNA, leading to the formation of s(2)U34. The chain is tRNA-specific 2-thiouridylase MnmA from Paracidovorax citrulli (strain AAC00-1) (Acidovorax citrulli).